The primary structure comprises 185 residues: Ribosome-recycling factor (185 aa).

This sequence belongs to the RRF family.

Its subcellular location is the cytoplasm. Responsible for the release of ribosomes from messenger RNA at the termination of protein biosynthesis. May increase the efficiency of translation by recycling ribosomes from one round of translation to another. The polypeptide is Ribosome-recycling factor (Corynebacterium efficiens (strain DSM 44549 / YS-314 / AJ 12310 / JCM 11189 / NBRC 100395)).